Reading from the N-terminus, the 505-residue chain is Maturase K (505 aa).

It belongs to the intron maturase 2 family. MatK subfamily.

It localises to the plastid. It is found in the chloroplast. Its function is as follows. Usually encoded in the trnK tRNA gene intron. Probably assists in splicing its own and other chloroplast group II introns. The polypeptide is Maturase K (Silene otites (Spanish catchfly)).